The chain runs to 197 residues: Imidazoleglycerol-phosphate dehydratase (197 aa).

It belongs to the imidazoleglycerol-phosphate dehydratase family.

It is found in the cytoplasm. It catalyses the reaction D-erythro-1-(imidazol-4-yl)glycerol 3-phosphate = 3-(imidazol-4-yl)-2-oxopropyl phosphate + H2O. It functions in the pathway amino-acid biosynthesis; L-histidine biosynthesis; L-histidine from 5-phospho-alpha-D-ribose 1-diphosphate: step 6/9. The polypeptide is Imidazoleglycerol-phosphate dehydratase (Hahella chejuensis (strain KCTC 2396)).